The sequence spans 360 residues: Phospho-N-acetylmuramoyl-pentapeptide-transferase (360 aa).

Transmembrane regions (helical) follow at residues 21 to 41 (YITVRAILTLLTALFISLWIG), 73 to 93 (TMGGVMILFSIGVSTLLWANL), 94 to 114 (ANPYIWVCLFVLFGYGAIGFV), 132 to 152 (WKYFWMSVVALVAILWLYWLG), 168 to 188 (IMPQLGLFYIVLSYFVIVGTG), 199 to 219 (GLAIMPTALVAGAFALIAWAT), 239 to 259 (VVVFCTAIVGASLGFLWFNTY), 263 to 283 (VFMGDVGSLALGGALGVVAIL), 288 to 308 (FLLVIMGGVFVVEALSVILQV), and 338 to 358 (VIIRFWIISLMLVLMGLVTLK).

Belongs to the glycosyltransferase 4 family. MraY subfamily. Mg(2+) is required as a cofactor.

It localises to the cell inner membrane. The catalysed reaction is UDP-N-acetyl-alpha-D-muramoyl-L-alanyl-gamma-D-glutamyl-meso-2,6-diaminopimeloyl-D-alanyl-D-alanine + di-trans,octa-cis-undecaprenyl phosphate = di-trans,octa-cis-undecaprenyl diphospho-N-acetyl-alpha-D-muramoyl-L-alanyl-D-glutamyl-meso-2,6-diaminopimeloyl-D-alanyl-D-alanine + UMP. It participates in cell wall biogenesis; peptidoglycan biosynthesis. Catalyzes the initial step of the lipid cycle reactions in the biosynthesis of the cell wall peptidoglycan: transfers peptidoglycan precursor phospho-MurNAc-pentapeptide from UDP-MurNAc-pentapeptide onto the lipid carrier undecaprenyl phosphate, yielding undecaprenyl-pyrophosphoryl-MurNAc-pentapeptide, known as lipid I. The chain is Phospho-N-acetylmuramoyl-pentapeptide-transferase from Haemophilus influenzae (strain PittEE).